The chain runs to 631 residues: Phosphomethylpyrimidine synthase (631 aa).

Residues Asn239, Met268, Tyr297, His333, 353 to 355 (SRG), 394 to 397 (DGLR), and Glu433 contribute to the substrate site. His437 provides a ligand contact to Zn(2+). Tyr460 provides a ligand contact to substrate. His501 lines the Zn(2+) pocket. Residues Cys581, Cys584, and Cys589 each contribute to the [4Fe-4S] cluster site.

It belongs to the ThiC family. Homodimer. The cofactor is [4Fe-4S] cluster.

The catalysed reaction is 5-amino-1-(5-phospho-beta-D-ribosyl)imidazole + S-adenosyl-L-methionine = 4-amino-2-methyl-5-(phosphooxymethyl)pyrimidine + CO + 5'-deoxyadenosine + formate + L-methionine + 3 H(+). It functions in the pathway cofactor biosynthesis; thiamine diphosphate biosynthesis. Functionally, catalyzes the synthesis of the hydroxymethylpyrimidine phosphate (HMP-P) moiety of thiamine from aminoimidazole ribotide (AIR) in a radical S-adenosyl-L-methionine (SAM)-dependent reaction. The protein is Phosphomethylpyrimidine synthase of Salmonella typhi.